We begin with the raw amino-acid sequence, 106 residues long: Synaptic plasticity regulator PANTS (106 aa).

The segment at 67–106 (LQQSEKTRLEGKQNNSPVWTLRKNPPPDWYLPLDPGKPRQ) is disordered.

This sequence belongs to the UPF0545 family. Rapidly degraded by proteolysis following neuronal stimulation, resulting in increased AMPA receptor clustering.

The protein resides in the synapse. The protein localises to the synaptic cleft. Negatively regulates long-term potentiation and modulates adult synaptic plasticity. The chain is Synaptic plasticity regulator PANTS from Xenopus laevis (African clawed frog).